Reading from the N-terminus, the 255-residue chain is Hemin import ATP-binding protein HmuV (255 aa).

The region spanning 2–238 is the ABC transporter domain; the sequence is LRVENLSIRR…EPLRAVFGLE (237 aa). 34-41 provides a ligand contact to ATP; it reads GPNGAGKS.

This sequence belongs to the ABC transporter superfamily. Heme (hemin) importer (TC 3.A.1.14.5) family. In terms of assembly, the complex is composed of two ATP-binding proteins (HmuV), two transmembrane proteins (HmuU) and a solute-binding protein (HmuT).

The protein localises to the cell inner membrane. Its function is as follows. Part of the ABC transporter complex HmuTUV involved in hemin import. Responsible for energy coupling to the transport system. The polypeptide is Hemin import ATP-binding protein HmuV (Pseudomonas aeruginosa (strain ATCC 15692 / DSM 22644 / CIP 104116 / JCM 14847 / LMG 12228 / 1C / PRS 101 / PAO1)).